A 325-amino-acid polypeptide reads, in one-letter code: ATP phosphoribosyltransferase (325 aa).

The protein belongs to the ATP phosphoribosyltransferase family. Long subfamily. The cofactor is Mg(2+).

The protein resides in the cytoplasm. It carries out the reaction 1-(5-phospho-beta-D-ribosyl)-ATP + diphosphate = 5-phospho-alpha-D-ribose 1-diphosphate + ATP. Its pathway is amino-acid biosynthesis; L-histidine biosynthesis; L-histidine from 5-phospho-alpha-D-ribose 1-diphosphate: step 1/9. Feedback inhibited by histidine. In terms of biological role, catalyzes the condensation of ATP and 5-phosphoribose 1-diphosphate to form N'-(5'-phosphoribosyl)-ATP (PR-ATP). Has a crucial role in the pathway because the rate of histidine biosynthesis seems to be controlled primarily by regulation of HisG enzymatic activity. The sequence is that of ATP phosphoribosyltransferase from Bradyrhizobium sp. (strain ORS 278).